The chain runs to 550 residues: Hydroxylamine reductase (550 aa).

4 residues coordinate [2Fe-2S] cluster: Cys-3, Cys-6, Cys-18, and Cys-25. Residues His-249, Glu-273, Cys-317, Cys-405, Cys-433, Cys-458, Glu-492, and Lys-494 each coordinate hybrid [4Fe-2O-2S] cluster. Cys-405 carries the cysteine persulfide modification.

This sequence belongs to the HCP family. The cofactor is [2Fe-2S] cluster. Requires hybrid [4Fe-2O-2S] cluster as cofactor.

The protein localises to the cytoplasm. The enzyme catalyses A + NH4(+) + H2O = hydroxylamine + AH2 + H(+). Its function is as follows. Catalyzes the reduction of hydroxylamine to form NH(3) and H(2)O. The sequence is that of Hydroxylamine reductase from Escherichia coli O6:K15:H31 (strain 536 / UPEC).